The sequence spans 70 residues: Probable protein transport protein Sec61 subunit gamma (70 aa).

The Cytoplasmic segment spans residues 1 to 39; it reads MADQIQEILDVPREFLKDGIQFIKKCQKPDRREFIKISQ. The helical transmembrane segment at 40-58 threads the bilayer; that stretch reads AVGTGFLIMGAVGYLVKLI. Over 59–70 the chain is Extracellular; it reads HIPLNQVLVGGA.

Belongs to the SecE/SEC61-gamma family. Heterotrimeric complex composed of SEC61-alpha, SEC61-beta and SEC61-gamma.

It localises to the endoplasmic reticulum membrane. Functionally, necessary for protein translocation in the endoplasmic reticulum. The protein is Probable protein transport protein Sec61 subunit gamma of Neurospora crassa (strain ATCC 24698 / 74-OR23-1A / CBS 708.71 / DSM 1257 / FGSC 987).